The chain runs to 279 residues: Protein BASIC PENTACYSTEINE2 (279 aa).

The tract at residues 126-167 (TKKRKTNAKAGSTPKAKKPRKPKDENSNNNNNNNTNVTRVKP) is disordered. Low complexity predominate over residues 152–161 (SNNNNNNNTN).

The protein belongs to the BBR/BPC family. Expressed in seedlings, leaves and pistils. Detected in the base of flowers and tips of carpels, in sepal and petal vasculature, in pollen grains, in young rosette, in the lateral and tip of primary roots, and in ovule at the exception of the outer integument.

It is found in the nucleus. In terms of biological role, transcriptional regulator that specifically binds to GA-rich elements (GAGA-repeats) present in regulatory sequences of genes involved in developmental processes. This Arabidopsis thaliana (Mouse-ear cress) protein is Protein BASIC PENTACYSTEINE2.